A 724-amino-acid chain; its full sequence is Threonine--tRNA ligase 2, cytoplasmic (724 aa).

Alanine 2 carries the N-acetylalanine modification. Positions 44-72 form a coiled coil; that stretch reads QAEGPCLTREVAQLRAENRELRHCLYRLR. The interval 90 to 112 is disordered; it reads RAEAGRAAAGAQPPPSQSLEEDV. In terms of domain architecture, TGS spans 155 to 220; sequence DSSNVITVRV…EGDATVELLT (66 aa). Serine 451 is modified (phosphoserine).

Belongs to the class-II aminoacyl-tRNA synthetase family. As to quaternary structure, may be a component of the multisynthetase complex (MSC), a large multi-subunit complex which contains at least eight different aminoacyl-tRNA synthetases plus three auxillary subunits AIMP1, AIMP2 and EEF1E1. Interacts with the MSC components EPRS1, AIMP1, AIMP2 and KARS1.

It localises to the cytoplasm. The protein resides in the nucleus. The enzyme catalyses tRNA(Thr) + L-threonine + ATP = L-threonyl-tRNA(Thr) + AMP + diphosphate + H(+). Its function is as follows. Catalyzes the attachment of threonine to tRNA(Thr) in a two-step reaction: threonine is first activated by ATP to form Thr-AMP and then transferred to the acceptor end of tRNA(Thr). Also edits incorrectly charged tRNA(Thr) via its editing domain, at the post-transfer stage. The protein is Threonine--tRNA ligase 2, cytoplasmic (TARS3) of Bos taurus (Bovine).